A 377-amino-acid polypeptide reads, in one-letter code: tRNA-specific 2-thiouridylase MnmA (377 aa).

Residues 18–25 and methionine 44 each bind ATP; that span reads AMSGGVDS. Catalysis depends on cysteine 113, which acts as the Nucleophile. A disulfide bond links cysteine 113 and cysteine 210. Glycine 137 contacts ATP. The segment at 159-161 is interaction with tRNA; the sequence is RDQ. Cysteine 210 serves as the catalytic Cysteine persulfide intermediate.

It belongs to the MnmA/TRMU family.

It localises to the cytoplasm. It carries out the reaction S-sulfanyl-L-cysteinyl-[protein] + uridine(34) in tRNA + AH2 + ATP = 2-thiouridine(34) in tRNA + L-cysteinyl-[protein] + A + AMP + diphosphate + H(+). Functionally, catalyzes the 2-thiolation of uridine at the wobble position (U34) of tRNA, leading to the formation of s(2)U34. The protein is tRNA-specific 2-thiouridylase MnmA of Rhodospirillum rubrum (strain ATCC 11170 / ATH 1.1.1 / DSM 467 / LMG 4362 / NCIMB 8255 / S1).